Here is a 449-residue protein sequence, read N- to C-terminus: MPRLFGTDGVRGLANGETITADLALRLAQAAAHVLGQDARDAGRRPVAVVARDPRVSGEFIAAAVAAGLASSGVDVFDAGVIPTPATAYLIADFDADFGVMISASHNPAPDNGIKFFAAGGRKLADELEDRIEAQLSQPVLLPTGADVGRIRRFADAEDRYVLHLLGTLQHRLDGIHVVLDCAHGAAAGISPEVSTDAGARVTVIGNDPDGMNINDRVGSTHLDLLAEAVLGHGADVGIAYDGDADRCLAVDHTGAIIDGDQIMAVLALSMARRGLLVERTLVATVMSNLGLRIAMAENDITVLQTRVGDRYVLEAMNEGGYSLGGEQSGHLVIAEHATTGDGILTGIQLLGEMAATGRSLHELASVMTVYPQVMINVRGVDRERVSDDAELNAAVARAEAELGDTGRILMRASGTEPMIRVMVEAADQATAERHAQELAALVTERLAI.

Ser105 functions as the Phosphoserine intermediate in the catalytic mechanism. The Mg(2+) site is built by Ser105, Asp242, Asp244, and Asp246. Ser105 is modified (phosphoserine).

It belongs to the phosphohexose mutase family. Requires Mg(2+) as cofactor. In terms of processing, activated by phosphorylation.

The catalysed reaction is alpha-D-glucosamine 1-phosphate = D-glucosamine 6-phosphate. Catalyzes the conversion of glucosamine-6-phosphate to glucosamine-1-phosphate. The sequence is that of Phosphoglucosamine mutase from Clavibacter sepedonicus (Clavibacter michiganensis subsp. sepedonicus).